Consider the following 946-residue polypeptide: Zinc finger protein rotund (946 aa).

Disordered stretches follow at residues 10 to 30 (GPQLAHHPHSNPHNSSHGHSD) and 156 to 269 (FRKP…HNLN). Positions 161-176 (NNNGYSWSTGNNNEVV) are enriched in polar residues. Low complexity predominate over residues 177 to 188 (SHSSNGHTNNHP). 2 stretches are compositionally biased toward polar residues: residues 198–230 (ASATQATSVSAINLNQAQPASQTRSNFGSSIKS) and 242–269 (TCKSQENNSGQNPTPNSLSDHNPAHNLN). 6 consecutive C2H2-type zinc fingers follow at residues 488–510 (YQCKMCPQIFSSKADLQLHTQIH), 517–539 (YKCTQCSKAFANSSYLSQHTRIH), 545–567 (YRCEICQRKFTQLSHLQQHIRTH), 573–597 (YKCRHPGCQKAFSQLSNLQSHSRCH), 603–625 (FKCNSCYKCFSDEPSLLEHIPKH), and 634–656 (HICQYCGKSYTQETYLTKHMQKH). The segment at 683 to 853 (GGSANPANGP…TPSAVGPYDA (171 aa)) is disordered. Low complexity-rich tracts occupy residues 739–762 (HQQQQQQQQQQQQQQQQQQQQQQQ) and 770–790 (HGVPPQQHVPPQQQQQQQQQQ). Over residues 813–822 (TAPNGSQSNG) the composition is skewed to polar residues. The segment covering 828 to 841 (QPHHRMPDPVREDI) has biased composition (basic and acidic residues).

It belongs to the krueppel C2H2-type zinc-finger protein family. Interacts with nab; which acts as a corepressor. In terms of tissue distribution, isoform rn and isoform roe are expressed in non-overlapping domains in the larval imaginal disks. Isoform rn is first expressed during the early third larval instar in the leg, wing, haltere and antennal part of the eye-antennal imaginal disk. It is observed as a ring in the leg and antenna disks and in the presumptive wing pouch and capitellum of wing and haltere disks respectively. In wing disk it is expressed in 3 concentric domains in the wing pouch. In late third instar, expression of isoform rn in the leg disk is no longer evident, but is maintained in the other disks. Isoform roe appears in the third instar and is confined to the eye part of the eye-antennal imaginal disk in a band of 4-6 cells at the morphogenetic furrow. There is no evidence of roe expression in other imaginal disks.

Its subcellular location is the nucleus. Its function is as follows. Transcription factor involved in imaginal disks development. Isoform rn is required in the wings, antenna, haltere, proboscis and legs disks, while isoform roe is required in the eye disk. Together with nab corepressor, it is involved in the initiation and maintenance of wingless (wg) expression in the wing hinge, by limiting the expression of wg to this compartment. Also required for the epithelial-mesenchymal transition branch of basolateral junctions signaling. In Drosophila melanogaster (Fruit fly), this protein is Zinc finger protein rotund.